The sequence spans 62 residues: Large ribosomal subunit protein eL24 (62 aa).

Zn(2+)-binding residues include Cys-6, Cys-9, Cys-32, and Cys-36. A C4-type zinc finger spans residues 6-36 (CSFCEGTIEPGCGKKYVKKDGSVMHFCSSKC).

It belongs to the eukaryotic ribosomal protein eL24 family. Part of the 50S ribosomal subunit. Forms a cluster with proteins L3 and L14. Zn(2+) is required as a cofactor.

Binds to the 23S rRNA. The protein is Large ribosomal subunit protein eL24 of Methanococcus maripaludis (strain C7 / ATCC BAA-1331).